The chain runs to 394 residues: Elongation factor Tu (394 aa).

The tr-type G domain maps to 10–204 (KPHVNVGTIG…ALDTYIPEPE (195 aa)). Positions 19 to 26 (GHVDHGKT) are G1. 19–26 (GHVDHGKT) contributes to the GTP binding site. Thr26 contributes to the Mg(2+) binding site. A G2 region spans residues 60–64 (GITIN). A G3 region spans residues 81–84 (DCPG). GTP-binding positions include 81-85 (DCPGH) and 136-139 (NKCD). Residues 136–139 (NKCD) are G4. The interval 174-176 (SAL) is G5.

It belongs to the TRAFAC class translation factor GTPase superfamily. Classic translation factor GTPase family. EF-Tu/EF-1A subfamily. In terms of assembly, monomer.

Its subcellular location is the cytoplasm. It carries out the reaction GTP + H2O = GDP + phosphate + H(+). Its function is as follows. GTP hydrolase that promotes the GTP-dependent binding of aminoacyl-tRNA to the A-site of ribosomes during protein biosynthesis. The chain is Elongation factor Tu from Colwellia psychrerythraea (strain 34H / ATCC BAA-681) (Vibrio psychroerythus).